The chain runs to 616 residues: Chaperone protein HscA (616 aa).

Belongs to the heat shock protein 70 family.

Chaperone involved in the maturation of iron-sulfur cluster-containing proteins. Has a low intrinsic ATPase activity which is markedly stimulated by HscB. Involved in the maturation of IscU. This is Chaperone protein HscA from Salmonella enteritidis PT4 (strain P125109).